A 443-amino-acid polypeptide reads, in one-letter code: Serine/threonine-protein phosphatase 2A 55 kDa regulatory subunit B beta isoform (443 aa).

WD repeat units lie at residues 22–61, 87–128, 171–209, and 220–260; these read TEADIISTVEFNHTGELLATGDKGGRVVIFQREQESKNQV, EIEE…KRPE, AHTYHINSISVNSDYETYMSADDLRINLWNFEITNQSFN, and ELTE…LCDR. S275 carries the phosphoserine modification. WD repeat units lie at residues 279–317, 334–375, and 410–442; these read EIISSISDVKFSHSGRYIMTRDYLTVKVWDLNMENRPIE, ENDC…DVTL, and DFSKKILHTAWHPSENIIAVAATNNLYIFQDKV. The residue at position 295 (Y295) is a Phosphotyrosine. Position 298 is a phosphothreonine (T298).

Belongs to the phosphatase 2A regulatory subunit B family. PP2A consists of a common heterodimeric core enzyme, composed of a 36 kDa catalytic subunit (subunit C) and a 65 kDa constant regulatory subunit (PR65 or subunit A), that associates with a variety of regulatory subunits. Proteins that associate with the core dimer include three families of regulatory subunits B (the R2/B/PR55/B55, R3/B''/PR72/PR130/PR59 and R5/B'/B56 families), the 48 kDa variable regulatory subunit, viral proteins, and cell signaling molecules. Interacts with TOMM22. Interacts with IER5 (via N- and C-terminal regions).

It is found in the cytoplasm. Its subcellular location is the cytoskeleton. It localises to the membrane. In terms of biological role, the B regulatory subunit might modulate substrate selectivity and catalytic activity, and might also direct the localization of the catalytic enzyme to a particular subcellular compartment. The protein is Serine/threonine-protein phosphatase 2A 55 kDa regulatory subunit B beta isoform (PPP2R2B) of Bos taurus (Bovine).